The sequence spans 211 residues: Dual specificity phosphatase 29 (211 aa).

A Tyrosine-protein phosphatase domain is found at 47-192 (HVNEVWPGIY…LRTLDIQLAI (146 aa)). 136–143 (HCAMGRSR) contacts substrate. Residue cysteine 137 is the Phosphocysteine intermediate of the active site.

The protein belongs to the protein-tyrosine phosphatase family. Non-receptor class dual specificity subfamily.

The protein localises to the cytoplasm. The protein resides in the nucleus. The enzyme catalyses O-phospho-L-tyrosyl-[protein] + H2O = L-tyrosyl-[protein] + phosphate. It carries out the reaction O-phospho-L-seryl-[protein] + H2O = L-seryl-[protein] + phosphate. The catalysed reaction is O-phospho-L-threonyl-[protein] + H2O = L-threonyl-[protein] + phosphate. In terms of biological role, dual specificity phosphatase able to dephosphorylate phosphotyrosine, phosphoserine and phosphothreonine residues within the same substrate, with a preference for phosphotyrosine as a substrate. Involved in the modulation of AMPK and MAPK1/2 signaling pathways. This chain is Dual specificity phosphatase 29 (dusp29), found in Callorhinchus milii (Ghost shark).